Reading from the N-terminus, the 230-residue chain is Probable carboxylesterase Culp2 (230 aa).

Residues 1-32 (MNDLLTRRLLTMGAAAAMLAAVLLLTPITVPA) constitute a signal peptide (tat-type signal). The cysteines at positions 45 and 112 are disulfide-linked. S123 acts as the Nucleophile in catalysis. C185 and C192 form a disulfide bridge. D189 is an active-site residue. H207 serves as the catalytic Proton donor/acceptor.

It belongs to the cutinase family. Post-translationally, predicted to be exported by the Tat system. The position of the signal peptide cleavage has not been experimentally proven.

It is found in the secreted. Its subcellular location is the cell surface. This Mycobacterium bovis (strain ATCC BAA-935 / AF2122/97) protein is Probable carboxylesterase Culp2 (cut2).